The chain runs to 409 residues: Argininosuccinate synthase (409 aa).

ATP is bound by residues 11-19 (AYSGGLDTS) and Ala-38. Residues Tyr-91 and Ser-96 each contribute to the L-citrulline site. Position 121 (Gly-121) interacts with ATP. The L-aspartate site is built by Thr-123, Asn-127, and Asp-128. Position 127 (Asn-127) interacts with L-citrulline. The L-citrulline site is built by Arg-131, Ser-182, Ser-191, Glu-267, and Tyr-279.

This sequence belongs to the argininosuccinate synthase family. Type 1 subfamily. Homotetramer.

It localises to the cytoplasm. It catalyses the reaction L-citrulline + L-aspartate + ATP = 2-(N(omega)-L-arginino)succinate + AMP + diphosphate + H(+). Its pathway is amino-acid biosynthesis; L-arginine biosynthesis; L-arginine from L-ornithine and carbamoyl phosphate: step 2/3. The polypeptide is Argininosuccinate synthase (Nitrobacter winogradskyi (strain ATCC 25391 / DSM 10237 / CIP 104748 / NCIMB 11846 / Nb-255)).